The following is a 1227-amino-acid chain: MPQSTAQLKSPLLHTLLENLTQSSICTSTAIWHVPNPVNFVCNHNENSFDNKNNSVTTITTTDVSTNNHKNTNYDYEQQEQWSNEEINSNQESNEIYTMTFLKLNNAANRVAMNLANYLERKWSSITNKINRTQLNQHSLSIDEPIELRNQSDTVIALFMPPGIDRIVVQIACMKLHLAYMPLDRNVPAGRITQILHKLKPILILIDKDYYDFIYDDDHNDNDKMSDLSSSIDNNNKSLLSRKLSSNDFIIGNLNQLKLTFQLFDVKVYEYIKLMKLSKYYSRSDIYTASIPIRVCLFPFESDPIVLVLFTSGSTSSGPKPVKLRTTQLFNRLEWQWDSTSDMDLPNFENATCNSNTSVKRIGLAKTAWGFVDAFTELFSCLLAGIPVVVPGGSACPSEKSITDVQQLINLTKHFKISHITTVPTQMNLWLKQLRLKPKEIVTSHLSSLRTVIVSGDIVHPKMACEFFQLFKNPEMRLINLYGTTEVAGDVTGLVFRGEIDVKKHTKVVPCGLERENNKSGKPVLSVGTVIQGTAIFIVQDDDDHHLHHEKDNENQPDKWSNPSLSIIGSVDRKPNWDKFPFKILPKGHIGHVCILGQQVSDSASRCQRIESLPEDLNCVDTNKCKSDVESCENNSSKEIRVFMPGDLGFIDPQTNHLYICGRTNELIKINGIRFHANDIDNLFIELKKNWKAKNMTNCTREELLVNKVSETVTLTIQTVHGRDLKLVCFYVLHMNENQNTMNIEPKENYDKLEDLPKQDDFIAVFSHYLPPYLSPTFINIDHIPLMRTSGKVDKEYLRQYYYSKHHCEISEITKVLQPGWVNDPVKHMTENNNSTSDQSFGKNSRDFKLSRGRERARKVLAEVLGIRGPNGDVIPGRPKDDEDFYLLGGDSLLTVLTTEQLRQLGFNVNLDVFTKTGKIGSILTSLQNTESDFLKTQEPFTSDSWTVKEISMNKVLKKSHTCNLINRIPLMEDECYLSPTICPQGSYEIFIEQWNDGNFSVTERHEIVDVLVNAFIEKDRLSHALKLDRTDLTEAIEVFLNAHKSNPGIVLTARYYYENPYEHTFVKNKLVGVIISLPAKHVPSLHLTPKLALVQRFFDECSNKDQFQDISMDNLLATQMVAITSQSPYSKSKYLQYMLSNWKKISLKLLTRLERDLLRIAAKQGYSGVITFNTNEVTEEVCSQLGYKVIQTTMLKSFMNKENLLLLPQYERIRCSYMIKELNPSS.

The adenylation stretch occupies residues 1 to 850; it reads MPQSTAQLKS…FGKNSRDFKL (850 aa). Positions 851–931 constitute a Carrier domain; that stretch reads SRGRERARKV…SILTSLQNTE (81 aa). S892 carries the O-(pantetheine 4'-phosphoryl)serine modification. Residues 932-1227 are condensation; that stretch reads SDFLKTQEPF…YMIKELNPSS (296 aa).

The protein belongs to the NRP synthetase family. Pantetheine 4'-phosphate is required as a cofactor. In terms of tissue distribution, in virgin and paired males, bilaterally expressed in some cells in the head. During pairing, expressed throughout the ventral side of the body probably in ciliated neurons. Highly expressed in virgin females in cells throughout the body and only weakly expressed in sexually mature females. In virgin females, expressed in some cells in the head and on the dorsal surface and lateral edges of body.

The enzyme catalyses tryptamine + beta-alanine + ATP = beta-alanyl-tryptamine + AMP + diphosphate + H(+). The catalysed reaction is beta-alanine + ATP + H(+) = beta-alanyl-5'-AMP + diphosphate. It carries out the reaction beta-alanyl-5'-AMP + holo-[peptidyl-carrier protein] = beta-alanyl-[peptidyl-carrier protein] + AMP + H(+). It catalyses the reaction beta-alanyl-[peptidyl-carrier protein] + tryptamine = beta-alanyl-tryptamine + holo-[peptidyl-carrier protein] + H(+). Catalyzes the condensation of beta-alanine with tryptamine to form beta-alanyl-tryptamine (BATT). Beta-alanyl-tryptamine is an essential pheromone produced by the male that stimulates female sexual development during pairing. The chain is Beta-alanyl-bioamine nonribosomal peptide synthetase from Schistosoma mansoni (Blood fluke).